The chain runs to 805 residues: Mediator of RNA polymerase II transcription subunit 25 (805 aa).

Disordered stretches follow at residues 430-455 (GSAQ…GQTV) and 786-805 (SQSQ…GFMN). Composition is skewed to low complexity over residues 438 to 451 (SAPS…PSMS) and 786 to 795 (SQSQGSSQGL).

This sequence belongs to the Mediator complex subunit 25 family. As to quaternary structure, interacts with MYC2 (via N-terminus). MED25 competes with JAZ7 for binding to MYC2.

Component of the Mediator complex, a coactivator involved in the regulated transcription of nearly all RNA polymerase II-dependent genes. Mediator functions as a bridge to convey information from gene-specific regulatory proteins to the basal RNA polymerase II transcription machinery. Mediator is recruited to promoters by direct interactions with regulatory proteins and serves as a scaffold for the assembly of a functional pre-initiation complex with RNA polymerase II and the general transcription factors. Plays a positive role in wound-induced activation of jasmonate-responsive genes whose promoters are targeted by MYC2. This is Mediator of RNA polymerase II transcription subunit 25 from Solanum lycopersicum (Tomato).